Consider the following 55-residue polypeptide: Large ribosomal subunit protein bL33B (55 aa).

Belongs to the bacterial ribosomal protein bL33 family.

The protein is Large ribosomal subunit protein bL33B of Kineococcus radiotolerans (strain ATCC BAA-149 / DSM 14245 / SRS30216).